Consider the following 1127-residue polypeptide: Disease resistance protein RPS6 (1127 aa).

Residue M1 is modified to N-acetylmethionine. In terms of domain architecture, TIR spans 12–176 (WSYHVFPSFS…EIANDILGKM (165 aa)). Residue E87 is part of the active site. An NB-ARC domain is found at 191-452 (EDHITKMSSL…HIACIFNGEK (262 aa)). LRR repeat units lie at residues 197–221 (MSSL…GIGK), 540–563 (IDET…LFLK), 587–609 (PSRL…NFHP), 610–632 (ENLV…VHSL), 633–656 (AGLR…SMAT), 658–679 (LETL…IQYL), 680–704 (NKLN…NLKS), 766–790 (SPTL…IQNL), 791–813 (YQLE…GINL), 814–834 (DSLI…PDIS), and 835–857 (TNIS…IEKL).

In terms of assembly, interacts with EDS1. In terms of tissue distribution, ubiquitous.

The enzyme catalyses NAD(+) + H2O = ADP-D-ribose + nicotinamide + H(+). Disease resistance (R) protein that specifically recognizes the hopA1 type III effector avirulence protein from Pseudomonas syringae. Resistance proteins guard the plant against pathogens that contain an appropriate avirulence protein via an indirect interaction with this avirulence protein. That triggers a defense system including the hypersensitive response, which restricts the pathogen growth. This is Disease resistance protein RPS6 (RPS6) from Arabidopsis thaliana (Mouse-ear cress).